A 153-amino-acid polypeptide reads, in one-letter code: UPF0756 membrane protein lwe1581 (153 aa).

A run of 4 helical transmembrane segments spans residues 6-26 (MLFL…SLII), 54-74 (WGVT…QIGF), 80-100 (SFKS…SILA), and 117-137 (LVFG…GPVI).

The protein belongs to the UPF0756 family.

Its subcellular location is the cell membrane. This is UPF0756 membrane protein lwe1581 from Listeria welshimeri serovar 6b (strain ATCC 35897 / DSM 20650 / CCUG 15529 / CIP 8149 / NCTC 11857 / SLCC 5334 / V8).